A 771-amino-acid chain; its full sequence is Ribonucleoside-diphosphate reductase large subunit (771 aa).

Residues 1-92 (MFVIKRNGYK…VSNLHKETKK (92 aa)) enclose the ATP-cone domain. Residues 5 to 6 (KR), 11 to 17 (ENVMFDK), Thr53, Asp57, and Lys88 contribute to the ATP site. Positions 202 and 217 each coordinate GDP. Residues 226–228 (DSI), Lys243, and Arg256 each bind dTTP. Asn427 serves as a coordination point for GDP. The Proton acceptor role is filled by Asn427. Cys429 (cysteine radical intermediate) is an active-site residue. GDP contacts are provided by residues Glu431 and 603-606 (TAST). Residue Glu431 is the Proton acceptor of the active site.

The protein belongs to the ribonucleoside diphosphate reductase large chain family. Interacts with RNR2/OPG047 subunit. Mg(2+) serves as cofactor.

The catalysed reaction is a 2'-deoxyribonucleoside 5'-diphosphate + [thioredoxin]-disulfide + H2O = a ribonucleoside 5'-diphosphate + [thioredoxin]-dithiol. Functionally, ribonucleoside-diphosphate reductase holoenzyme provides the precursors necessary for viral DNA synthesis. Allows virus growth in non-dividing cells. Catalyzes the biosynthesis of deoxyribonucleotides from the corresponding ribonucleotides. This Homo sapiens (Human) protein is Ribonucleoside-diphosphate reductase large subunit (OPG080).